The primary structure comprises 174 residues: Dehydratase AgnL8 (174 aa).

Positions 24, 44, and 47 each coordinate substrate. Residues His-79 and His-104 contribute to the active site.

This sequence belongs to the scytalone dehydratase family. In terms of assembly, homotrimer. Each subunit contains an active site, located in the central part of the hydrophobic core of the monomer, which functions independently.

It participates in secondary metabolite biosynthesis. In terms of biological role, dehydratase; part of the gene cluster that mediates the biosynthesis of agnestins, dihydroxy-xanthone metabolites. The pathway begins with the assembly and cyclization of atrochrysone thioester by the non-reducing polyketide synthase Agnpks1. The atrochrysone carboxyl ACP thioesterase AgnL7 then breaks the thioester bond and releases the atrochrysone carboxylic acid as the first enzyme-free intermediate. The decarboxylase AgnL1 then catalyzes the concerted decarboxylation-elimination required to convert atochrysone carboxylic acid into emodin anthrone, which is further oxidized to emodin by the anthrone oxygenase AgnL2. Emodin then undergoes reduction catalyzed by the oxidoreductase AgnL4 to yield the dihydroquinone tautomer which is the substrate for reduction by the short chain dehydrogenase AgnL6 reduction to produce hydroxyketone, followed by AgnL8 dehydration and likely spontaneous autoxidation to chrysophanol. Baeyer-Villiger oxidation by the oxidase AgnL3 leads to monodictyphenone via cleavage of the C-10/C-10a bond of chrysophanol. Alternative cleavage at the C-4a/C-10 bond of chrysophanol also leads to the formation some cephalone F. Further conversion to agnestins A and B, requires reduction to dihydro-monodictyphenone, oxidation to agnestin C probably via an epoxide, and rearrangement to either agnestin A or agnestin B directly, although agnestin A or agnestin B can also interconvert. Within the cluster, AgnR1 is the only unassigned oxidoreductase present which could be involved in this conversion. However, AgnR1 seems not to be involved in this step, and thus genes involved in the proposed oxidation/reduction may be located elsewhere on the genome. Further agnestin A derivatives are probably formed by spontaneous decarboxylations, dehydrations and methanolysis reactions. The polypeptide is Dehydratase AgnL8 (Paecilomyces divaricatus (Penicillium divaricatum)).